The following is a 456-amino-acid chain: Adenylosuccinate lyase (456 aa).

Residues 15-16 (RY), 90-92 (NHD), and 122-123 (TS) each bind N(6)-(1,2-dicarboxyethyl)-AMP. The active-site Proton donor/acceptor is H171. Q248 lines the N(6)-(1,2-dicarboxyethyl)-AMP pocket. S296 acts as the Proton donor/acceptor in catalysis. Residues S297, 302–304 (KVN), N310, R336, and 341–345 (STVLR) each bind N(6)-(1,2-dicarboxyethyl)-AMP.

Belongs to the lyase 1 family. Adenylosuccinate lyase subfamily. Homotetramer.

It carries out the reaction N(6)-(1,2-dicarboxyethyl)-AMP = fumarate + AMP. The catalysed reaction is (2S)-2-[5-amino-1-(5-phospho-beta-D-ribosyl)imidazole-4-carboxamido]succinate = 5-amino-1-(5-phospho-beta-D-ribosyl)imidazole-4-carboxamide + fumarate. It catalyses the reaction (2S)-2-amino-2'-deoxyadenylo-succinate = dZMP + fumarate. The protein operates within purine metabolism; AMP biosynthesis via de novo pathway; AMP from IMP: step 2/2. It participates in purine metabolism; IMP biosynthesis via de novo pathway; 5-amino-1-(5-phospho-D-ribosyl)imidazole-4-carboxamide from 5-amino-1-(5-phospho-D-ribosyl)imidazole-4-carboxylate: step 2/2. It functions in the pathway purine metabolism. Catalyzes two reactions in de novo purine nucleotide biosynthesis. Catalyzes the breakdown of 5-aminoimidazole- (N-succinylocarboxamide) ribotide (SAICAR or 2-[5-amino-1-(5-phospho-beta-D-ribosyl)imidazole-4-carboxamido]succinate) to 5-aminoimidazole-4-carboxamide ribotide (AICAR or 5-amino-1-(5-phospho-beta-D-ribosyl)imidazole-4-carboxamide) and fumarate, and of adenylosuccinate (ADS or N(6)-(1,2-dicarboxyethyl)-AMP) to adenosine monophosphate (AMP) and fumarate. Its function is as follows. (Microbial infection) Catalyzes the conversion of 2-amino-2'-deoxyadenylo-succinate to dZMP and fumarate, when the bacterium is infected by a phage that produces the substrate of this reaction, a step in the synthesis of dZTP (2-amino-2'-deoxyadenosine 5'-triphosphate), which is a nucleotide then used by the phage as a DNA polymerase substrate. This is Adenylosuccinate lyase from Vibrio cholerae serotype O1 (strain ATCC 39541 / Classical Ogawa 395 / O395).